A 334-amino-acid chain; its full sequence is MKKNQFLKESDVTAESVFFMKRRQVLKALGISAAALSLPHAAHADLLSWFKGNDRPPAPAGKPLEFSKPAAWQNNLPLTPADKVSGYNNFYEFGLDKADPAANAGSLKTDPWTLKISGEVAKPLTLDHDDLTRRFPLEERIYRMRCVEAWSMVVPWIGFPLHKLLALAEPTSNAKYVAFETIYAPEQMPGQQDRFIGGGLKYPYVEGLRLDEAMHPLTLMTVGVYGKALPPQNGAPVRLIVPWKYGFKGIKSIVSIKLTSERPPTTWNLAAPDEYGFYANVNPHVDHPRWSQATERFIGSGGILDVQRQPTLLFNGYADQVASLYRGLDLRENF.

A signal peptide (tat-type signal) is located at residues 1–44 (MKKNQFLKESDVTAESVFFMKRRQVLKALGISAAALSLPHAAHA). Mo-molybdopterin-binding positions include asparagine 88, 91–92 (YE), cysteine 146, threonine 181, asparagine 233, arginine 238, and 249–251 (GIK).

Belongs to the MsrP family. As to quaternary structure, heterodimer of a catalytic subunit (MsrP) and a heme-binding subunit (MsrQ). Mo-molybdopterin serves as cofactor. In terms of processing, predicted to be exported by the Tat system. The position of the signal peptide cleavage has not been experimentally proven.

It is found in the periplasm. The enzyme catalyses L-methionyl-[protein] + a quinone + H2O = L-methionyl-(S)-S-oxide-[protein] + a quinol. It carries out the reaction L-methionyl-[protein] + a quinone + H2O = L-methionyl-(R)-S-oxide-[protein] + a quinol. Its function is as follows. Part of the MsrPQ system that repairs oxidized periplasmic proteins containing methionine sulfoxide residues (Met-O), using respiratory chain electrons. Thus protects these proteins from oxidative-stress damage caused by reactive species of oxygen and chlorine generated by the host defense mechanisms. MsrPQ is essential for the maintenance of envelope integrity under bleach stress, rescuing a wide series of structurally unrelated periplasmic proteins from methionine oxidation, including the primary periplasmic chaperone SurA and the lipoprotein Pal. The catalytic subunit MsrP is non-stereospecific, being able to reduce both (R-) and (S-) diastereoisomers of methionine sulfoxide. The protein is Protein-methionine-sulfoxide reductase catalytic subunit MsrP of Escherichia coli O127:H6 (strain E2348/69 / EPEC).